The chain runs to 227 residues: UPF0173 metal-dependent hydrolase BC_4613 (227 aa).

The protein belongs to the UPF0173 family.

In Bacillus cereus (strain ATCC 14579 / DSM 31 / CCUG 7414 / JCM 2152 / NBRC 15305 / NCIMB 9373 / NCTC 2599 / NRRL B-3711), this protein is UPF0173 metal-dependent hydrolase BC_4613.